Reading from the N-terminus, the 482-residue chain is uncharacterized protein (482 aa).

Transmembrane regions (helical) follow at residues 40-57 (LDWY…LSFL), 83-103 (AAVS…VLLV), 109-129 (HYYL…TCFV), 140-160 (LLLG…ISMT), 170-190 (LAYL…IATG), 205-225 (WLYI…LFCL), 278-298 (VIQF…PSIL), 311-331 (YMSV…CLLS), 338-358 (GWFI…LLAT), 366-386 (VATY…ITWI), 399-418 (ALGC…GQVY), and 428-448 (GFAL…RFYL).

The protein belongs to the major facilitator superfamily. Allantoate permease family.

The protein localises to the endoplasmic reticulum. It localises to the membrane. This is an uncharacterized protein from Schizosaccharomyces pombe (strain 972 / ATCC 24843) (Fission yeast).